Consider the following 241-residue polypeptide: Small ribosomal subunit protein uS3 (241 aa).

Residues 39 to 109 (IRQYITKNLS…QIRINVIEVQ (71 aa)) enclose the KH type-2 domain. A disordered region spans residues 214-241 (EEIPMPVPSQTPRRQRRRQQFEDRSGEE). Residues 232–241 (QQFEDRSGEE) are compositionally biased toward basic and acidic residues.

Belongs to the universal ribosomal protein uS3 family. In terms of assembly, part of the 30S ribosomal subunit. Forms a tight complex with proteins S10 and S14.

Binds the lower part of the 30S subunit head. Binds mRNA in the 70S ribosome, positioning it for translation. The chain is Small ribosomal subunit protein uS3 from Rippkaea orientalis (strain PCC 8801 / RF-1) (Cyanothece sp. (strain PCC 8801)).